A 601-amino-acid polypeptide reads, in one-letter code: ATP-dependent lipid A-core flippase (601 aa).

6 consecutive transmembrane segments (helical) span residues 35 to 55 (FAVA…LAFL), 77 to 97 (LAII…AILM), 150 to 170 (AVTS…VIFY), 173 to 193 (WQLA…IAKF), 263 to 283 (MEFL…YQVI), and 286 to 306 (SSTP…YEPV). The ABC transmembrane type-1 domain occupies 36 to 318 (AVAMVCMLIA…LTNVNNTIQQ (283 aa)). Positions 352–585 (IEIRNISFAY…RGEYYKLHQL (234 aa)) constitute an ABC transporter domain. Residue 384 to 391 (GMSGGGKT) participates in ATP binding.

Belongs to the ABC transporter superfamily. Lipid exporter (TC 3.A.1.106) family. In terms of assembly, homodimer.

It is found in the cell inner membrane. It carries out the reaction ATP + H2O + lipid A-core oligosaccharideSide 1 = ADP + phosphate + lipid A-core oligosaccharideSide 2.. Involved in lipopolysaccharide (LPS) biosynthesis. Translocates lipid A-core from the inner to the outer leaflet of the inner membrane. Transmembrane domains (TMD) form a pore in the inner membrane and the ATP-binding domain (NBD) is responsible for energy generation. The chain is ATP-dependent lipid A-core flippase from Syntrophus aciditrophicus (strain SB).